Reading from the N-terminus, the 769-residue chain is Scarecrow-like protein 14 (769 aa).

4 disordered regions span residues 1–23 (MGSY…DFDL), 128–157 (PSSS…GAFS), 279–320 (TEKK…ERSN), and 364–388 (TAQS…DSKK). The 382-residue stretch at 384-765 (NDSKKETADL…RIVYASSLWV (382 aa)) folds into the GRAS domain. Residues 391–451 (ADLRTLLVLC…EARLAGTGTQ (61 aa)) form a leucine repeat I (LRI) region. The segment at 470-536 (YQTYMSVCPF…GGSPKLRITG (67 aa)) is VHIID. The short motif at 501–505 (IHIID) is the VHIID element. The tract at residues 552-584 (ETGHRLARYCQRHNVPFEYNAIAQKWETIQVED) is leucine repeat II (LRII). Positions 593–687 (VVVNSLFRFR…KEFYGREIVN (95 aa)) are PFYRE. The segment at 690-765 (ACEGTERVER…RIVYASSLWV (76 aa)) is SAW.

This sequence belongs to the GRAS family. Expressed in roots, shoots, flowers and siliques.

It is found in the nucleus. In terms of biological role, probable transcription factor involved in plant development. This Arabidopsis thaliana (Mouse-ear cress) protein is Scarecrow-like protein 14 (SCL14).